The sequence spans 960 residues: Glycine dehydrogenase (decarboxylating) (960 aa).

Lysine 709 carries the post-translational modification N6-(pyridoxal phosphate)lysine.

The protein belongs to the GcvP family. In terms of assembly, the glycine cleavage system is composed of four proteins: P, T, L and H. Requires pyridoxal 5'-phosphate as cofactor.

It catalyses the reaction N(6)-[(R)-lipoyl]-L-lysyl-[glycine-cleavage complex H protein] + glycine + H(+) = N(6)-[(R)-S(8)-aminomethyldihydrolipoyl]-L-lysyl-[glycine-cleavage complex H protein] + CO2. The glycine cleavage system catalyzes the degradation of glycine. The P protein binds the alpha-amino group of glycine through its pyridoxal phosphate cofactor; CO(2) is released and the remaining methylamine moiety is then transferred to the lipoamide cofactor of the H protein. The polypeptide is Glycine dehydrogenase (decarboxylating) (Edwardsiella ictaluri (strain 93-146)).